The primary structure comprises 206 residues: Small ribosomal subunit protein uS5 (206 aa).

Over residues 1-23 (MTDTPTKQENQSKTENPPSSNAN) the composition is skewed to polar residues. A disordered region spans residues 1–52 (MTDTPTKQENQSKTENPPSSNANEQRRGNRNNDRKRNRRGDSKNERDSEWQE). The segment covering 24–52 (EQRRGNRNNDRKRNRRGDSKNERDSEWQE) has biased composition (basic and acidic residues). The S5 DRBM domain occupies 50 to 113 (WQERVVQIRR…SDGKKHLVRV (64 aa)).

The protein belongs to the universal ribosomal protein uS5 family. In terms of assembly, part of the 30S ribosomal subunit. Contacts proteins S4 and S8.

Functionally, with S4 and S12 plays an important role in translational accuracy. Its function is as follows. Located at the back of the 30S subunit body where it stabilizes the conformation of the head with respect to the body. The sequence is that of Small ribosomal subunit protein uS5 from Prochlorococcus marinus subsp. pastoris (strain CCMP1986 / NIES-2087 / MED4).